A 143-amino-acid polypeptide reads, in one-letter code: Cofilin (143 aa).

Ser-4 carries the phosphoserine modification. The ADF-H domain maps to 5-137 (GVAVADESLT…SYDSVLERVS (133 aa)).

Belongs to the actin-binding proteins ADF family. Interacts with actin and AIP1 in a ternary complex. Post-translationally, the N-terminus is blocked.

The protein resides in the cytoplasm. It is found in the cytoskeleton. It localises to the nucleus matrix. Controls reversibly actin polymerization and depolymerization in a pH-sensitive manner. It has the ability to bind G- and F-actin in a 1:1 ratio of cofilin to actin. Binding to F-actin is regulated by tropomyosin. It is the major component of intranuclear and cytoplasmic actin rods. Required for accumulation of actin at the cell division site via depolymerizing actin at the cell ends. In association with myosin II has a role in the assembly of the contractile ring via severing actin filaments. Involved in the maintenance of the contractile ring once formed. In association with profilin and capping protein, has a role in the mitotic reorganization of the actin cytoskeleton. In effect, yeast cofilin increases the rate of actin polymerization by making new ends available for actin subunit addition. Such a protein complex is important for the polarized growth of yeast cells. The chain is Cofilin (COF1) from Saccharomyces cerevisiae (strain ATCC 204508 / S288c) (Baker's yeast).